The primary structure comprises 457 residues: BAG family molecular chaperone regulator 4 (457 aa).

The tract at residues 1–101 (MSALRRSGYG…QPPYPSYNSN (101 aa)) is disordered. Ser7 bears the Phosphoserine mark. Residues 8–20 (GYGPSDGPSYGRY) show a composition bias toward low complexity. Residues 30–47 (VHPPPPLYPLRPEPPQPP) are compositionally biased toward pro residues. An omega-N-methylarginine mark is found at Arg40, Arg53, and Arg108. Disordered stretches follow at residues 113–136 (YPST…NGAY), 166–333 (STEV…DDSD), and 347–377 (LYGN…ESTP). Polar residues predominate over residues 166–182 (STEVPSTYRSSGNSPTP). An Omega-N-methylarginine modification is found at Arg185. Low complexity-rich tracts occupy residues 274-284 (STSPWPSSGSP) and 294-308 (QPKD…SDQS). 2 stretches are compositionally biased toward polar residues: residues 320-333 (QYES…DDSD) and 347-365 (LYGN…SSSL). The BAG domain occupies 379 to 456 (SIKKIIHVLE…AILEKLEKKG (78 aa)).

Binds to the ATPase domain of HSP/HSC70 chaperones. Binds to the death domain of TNFRSF1A in the absence of TNF and thereby prevents binding of adapter molecules such as TRADD or TRAF2. Binds to the death domain of TNFRSF12. Interacts with PRKN. In terms of tissue distribution, ubiquitous.

The protein localises to the cytoplasm. Its function is as follows. Inhibits the chaperone activity of HSP70/HSC70 by promoting substrate release. Prevents constitutive TNFRSF1A signaling. Negative regulator of PRKN translocation to damaged mitochondria. The sequence is that of BAG family molecular chaperone regulator 4 (BAG4) from Homo sapiens (Human).